The sequence spans 345 residues: Histidinol-phosphate aminotransferase (345 aa).

Lysine 206 is subject to N6-(pyridoxal phosphate)lysine.

Belongs to the class-II pyridoxal-phosphate-dependent aminotransferase family. Histidinol-phosphate aminotransferase subfamily. As to quaternary structure, homodimer. Pyridoxal 5'-phosphate is required as a cofactor.

The enzyme catalyses L-histidinol phosphate + 2-oxoglutarate = 3-(imidazol-4-yl)-2-oxopropyl phosphate + L-glutamate. It functions in the pathway amino-acid biosynthesis; L-histidine biosynthesis; L-histidine from 5-phospho-alpha-D-ribose 1-diphosphate: step 7/9. The sequence is that of Histidinol-phosphate aminotransferase from Bacteroides fragilis (strain YCH46).